We begin with the raw amino-acid sequence, 137 residues long: Large-conductance mechanosensitive channel (137 aa).

2 helical membrane passes run 10 to 30 and 76 to 96; these read FAMR…AAFG and GVFI…FMAI.

The protein belongs to the MscL family. In terms of assembly, homopentamer.

It localises to the cell inner membrane. Its function is as follows. Channel that opens in response to stretch forces in the membrane lipid bilayer. May participate in the regulation of osmotic pressure changes within the cell. In Enterobacter sp. (strain 638), this protein is Large-conductance mechanosensitive channel.